A 328-amino-acid polypeptide reads, in one-letter code: Biotin synthase (328 aa).

Positions tyrosine 42–serine 267 constitute a Radical SAM core domain. [4Fe-4S] cluster-binding residues include cysteine 57, cysteine 61, and cysteine 64. The [2Fe-2S] cluster site is built by cysteine 101, cysteine 133, cysteine 193, and arginine 265.

Belongs to the radical SAM superfamily. Biotin synthase family. As to quaternary structure, homodimer. [4Fe-4S] cluster is required as a cofactor. [2Fe-2S] cluster serves as cofactor.

It carries out the reaction (4R,5S)-dethiobiotin + (sulfur carrier)-SH + 2 reduced [2Fe-2S]-[ferredoxin] + 2 S-adenosyl-L-methionine = (sulfur carrier)-H + biotin + 2 5'-deoxyadenosine + 2 L-methionine + 2 oxidized [2Fe-2S]-[ferredoxin]. It participates in cofactor biosynthesis; biotin biosynthesis; biotin from 7,8-diaminononanoate: step 2/2. Functionally, catalyzes the conversion of dethiobiotin (DTB) to biotin by the insertion of a sulfur atom into dethiobiotin via a radical-based mechanism. This chain is Biotin synthase, found in Synechococcus sp. (strain CC9311).